A 320-amino-acid chain; its full sequence is Ribosome biogenesis protein BRX1 homolog 2 (320 aa).

Residues 1–40 are disordered; sequence MGRKRKHSETEAPAPVKKSDEPAPDRPKRTLLGWKDKSEG. Over residues 17–40 the composition is skewed to basic and acidic residues; that stretch reads KKSDEPAPDRPKRTLLGWKDKSEG. The Brix domain occupies 57–260; the sequence is EKVLVTCSRR…PIKIFAGSFG (204 aa). Residues 297–320 form a disordered region; sequence RKKMHELSNPLEPDEFADMWKDDE. A compositionally biased stretch (acidic residues) spans 308-320; that stretch reads EPDEFADMWKDDE.

This sequence belongs to the BRX1 family. As to expression, expressed in roots, rosette leaves, stems, flowers, siliques and seeds.

It localises to the nucleus. The protein localises to the nucleolus. In terms of biological role, involved in pre-rRNA processing and required for biogenesis of the large (60S) ribosomal subunit. Required for proper development. This Arabidopsis thaliana (Mouse-ear cress) protein is Ribosome biogenesis protein BRX1 homolog 2.